A 399-amino-acid polypeptide reads, in one-letter code: P2X purinoceptor 1 (399 aa).

Residues 1-28 (MARRLQDELSAFFFEYDTPRMVLVRNKK) are Cytoplasmic-facing. Residues 29 to 50 (VGVIFRLIQLVVLVYVIGWVFV) traverse the membrane as a helical segment. The Extracellular portion of the chain corresponds to 51-338 (YEKGYQTSSG…IPTMTTIGSG (288 aa)). 3 residues coordinate CTP: K68, K70, and K140. K70 is an ATP binding site. 3 cysteine pairs are disulfide-bonded: C117-C165, C126-C149, and C132-C159. N-linked (GlcNAc...) asparagine glycosylation is found at N153 and N184. T186 contributes to the CTP binding site. Residue T186 coordinates ATP. N-linked (GlcNAc...) asparagine glycosylation occurs at N210. Intrachain disulfides connect C217-C227 and C261-C270. ATP contacts are provided by S286, N290, and R292. Residues N290 and R292 each coordinate CTP. The N-linked (GlcNAc...) asparagine glycan is linked to N300. K309 lines the CTP pocket. K309 serves as a coordination point for ATP. A pore-forming motif region spans residues 331–338 (TMTTIGSG). A helical membrane pass occupies residues 339-358 (IGIFGVATVLCDLLLLHILP). Residues 359–399 (KRHYYKQKKFKYAEDMGPGEGERDPAATSSTLGLQENMRTS) are Cytoplasmic-facing. Residues 374–399 (MGPGEGERDPAATSSTLGLQENMRTS) are disordered. The segment covering 385-399 (ATSSTLGLQENMRTS) has biased composition (polar residues). A phosphoserine mark is found at S387 and S388. T389 is modified (phosphothreonine).

It belongs to the P2X receptor family. In terms of assembly, functional P2XRs are organized as homomeric and heteromeric trimers. Forms heterodimer with P2RX2. Forms heterodimer with P2RX4. Forms heterodimer with P2RX5. As to expression, expressed in smooth muscle of the bladder and arteries.

The protein resides in the cell membrane. The catalysed reaction is Ca(2+)(in) = Ca(2+)(out). It carries out the reaction K(+)(in) = K(+)(out). It catalyses the reaction Na(+)(in) = Na(+)(out). Activated by low concentrations of ATP (&lt;1 uM). Undergoes rapid desensitisation. Sensitives to the ATP agonist:alpha/beta-methylene-ATP. Modulated by cholesterol. In terms of biological role, ATP-gated nonselective transmembrane cation channel permeable to potassium, sodium and with relatively high calcium permeability. Furthermore, CTP functions as a weak affinity agonist for P2RX1. Plays a role in male fertility, bladder contraction and platelet aggregation. Specifically, plays an important role in neurogenic contraction of smooth muscle of the vas deferens, and therefore is essential for normal male reproductive function. In addition, contributes to smooth muscle contractions of the urinary bladder. On platelets, contributes to platelet activation and aggregation and thereby, also to thrombosis. On neutrophils, it is involved in chemotaxis and in mitigating the activation of circulating cells. The polypeptide is P2X purinoceptor 1 (P2rx1) (Mus musculus (Mouse)).